The sequence spans 161 residues: Nucleotide-binding protein PSEEN4469 (161 aa).

Belongs to the YajQ family.

In terms of biological role, nucleotide-binding protein. This chain is Nucleotide-binding protein PSEEN4469, found in Pseudomonas entomophila (strain L48).